A 662-amino-acid chain; its full sequence is ATP-dependent zinc metalloprotease YME1 homolog (662 aa).

Residue 206 to 213 (GPPGVGKT) participates in ATP binding. H425 contacts Zn(2+). E426 is an active-site residue. Positions 429 and 503 each coordinate Zn(2+).

In the N-terminal section; belongs to the AAA ATPase family. It in the C-terminal section; belongs to the peptidase M41 family. Zn(2+) serves as cofactor.

In terms of biological role, putative ATP-dependent protease. This Schistosoma mansoni (Blood fluke) protein is ATP-dependent zinc metalloprotease YME1 homolog.